A 257-amino-acid chain; its full sequence is Cilia- and flagella-associated protein 300 (257 aa).

This sequence belongs to the CFAP300 family.

Its subcellular location is the cytoplasm. The protein resides in the cytoskeleton. It localises to the flagellum axoneme. Cilium- and flagellum-specific protein that plays a role in axonemal structure organization and motility. Plays a role in outer and inner dynein arm assembly. The chain is Cilia- and flagella-associated protein 300 from Chlamydomonas reinhardtii (Chlamydomonas smithii).